The primary structure comprises 313 residues: Ribosomal RNA small subunit methyltransferase H (313 aa).

Residues 35-37 (GGH), D55, F79, D101, and Q108 contribute to the S-adenosyl-L-methionine site.

It belongs to the methyltransferase superfamily. RsmH family.

It is found in the cytoplasm. It catalyses the reaction cytidine(1402) in 16S rRNA + S-adenosyl-L-methionine = N(4)-methylcytidine(1402) in 16S rRNA + S-adenosyl-L-homocysteine + H(+). In terms of biological role, specifically methylates the N4 position of cytidine in position 1402 (C1402) of 16S rRNA. This chain is Ribosomal RNA small subunit methyltransferase H, found in Salmonella paratyphi A (strain ATCC 9150 / SARB42).